The chain runs to 176 residues: Co-chaperone protein HscB homolog (176 aa).

In terms of domain architecture, J spans 8-80 (DFFALFGLPV…LRRATYLLKL (73 aa)).

Belongs to the HscB family. In terms of assembly, interacts with HscA and stimulates its ATPase activity.

Functionally, co-chaperone involved in the maturation of iron-sulfur cluster-containing proteins. Seems to help targeting proteins to be folded toward HscA. This chain is Co-chaperone protein HscB homolog, found in Cupriavidus taiwanensis (strain DSM 17343 / BCRC 17206 / CCUG 44338 / CIP 107171 / LMG 19424 / R1) (Ralstonia taiwanensis (strain LMG 19424)).